A 497-amino-acid chain; its full sequence is tRNA (adenine(58)-N(1))-methyltransferase non-catalytic subunit TRM6 (497 aa).

2 disordered regions span residues 1–20 and 69–100; these read MEGS…DHRI and TSGG…IVDD. Residues 79 to 100 show a composition bias toward basic and acidic residues; it reads KREEPTAETKEAGTDNRNIVDD. 94 to 104 contributes to the substrate binding site; that stretch reads NRNIVDDGKSQ. Phosphothreonine is present on Thr107. Substrate is bound by residues 145–154 and 175–182; these read KYIKKKKKKY and REPGKINH. The tract at residues 276–354 is disordered; the sequence is SSEPKDSALV…EKQRRQEEQR (79 aa). 2 positions are modified to phosphoserine: Ser298 and Ser305. A compositionally biased stretch (basic and acidic residues) spans 327 to 354; it reads DPEHKGPKERGSKKDYIQEKQRRQEEQR. Substrate-binding positions include Arg349, Arg377, 415–423, and 434–441; these read RERGGVINL and QVLPDRSH. Residues 472–497 form a disordered region; it reads SNASTLESHETEEPAAKKRKCPESDS. Positions 478 to 497 are enriched in basic and acidic residues; sequence ESHETEEPAAKKRKCPESDS.

Belongs to the TRM6/GCD10 family. In terms of assembly, heterotetramer; composed of two copies of TRMT6 and two copies of TRMT61A. In terms of tissue distribution, expressed in brain, liver, testis and ovary.

It localises to the nucleus. Functionally, substrate-binding subunit of tRNA (adenine-N(1)-)-methyltransferase, which catalyzes the formation of N(1)-methyladenine at position 58 (m1A58) in initiator methionyl-tRNA. Together with the TRMT61A catalytic subunit, part of a mRNA N(1)-methyltransferase complex that mediates methylation of adenosine residues at the N(1) position of a small subset of mRNAs: N(1) methylation takes place in tRNA T-loop-like structures of mRNAs and is only present at low stoichiometries. This is tRNA (adenine(58)-N(1))-methyltransferase non-catalytic subunit TRM6 (TRMT6) from Homo sapiens (Human).